Here is a 547-residue protein sequence, read N- to C-terminus: Probable high-affinity hexose transporter ght8, mitochondrial (547 aa).

The transit peptide at 1–21 directs the protein to the mitochondrion; the sequence is MGKTLTIVMLVFVSMAGWMFG. The Mitochondrial intermembrane segment spans residues 22–86; it reads ADTGSIGGIT…SPLMDRIGKR (65 aa). Residues 87–107 form a helical membrane-spanning segment; the sequence is VSIMFWTIVYLIGIILQVTAV. Residues 108–112 lie on the Cytoplasmic side of the membrane; the sequence is PSWVQ. The chain crosses the membrane as a helical span at residues 113–133; that stretch reads IMVAKIWTGLAIGALSVLAPG. The Mitochondrial intermembrane portion of the chain corresponds to 134–144; the sequence is FQSEVAPATLR. A helical membrane pass occupies residues 145–165; that stretch reads GTIVTTYQLAVTGGIFIAACI. At 166 to 179 the chain is on the cytoplasmic side; that stretch reads NMGTHKLHKTAQWR. The chain crosses the membrane as a helical span at residues 180–200; the sequence is VSMGINLLWGIIMFIGISFLP. Over 201 to 304 the chain is Mitochondrial intermembrane; the sequence is ESPRYLIAIG…TGMNSPYLSA (104 aa). The helical transmembrane segment at 305–325 threads the bilayer; the sequence is LILDAVNFGCTFGGLFVLEFF. At 326–328 the chain is on the cytoplasmic side; it reads GRR. A helical membrane pass occupies residues 329–349; that stretch reads MPLIIGGVWQSITFFIYAAVG. The Mitochondrial intermembrane segment spans residues 350–363; it reads NRALTRKNGTSNHR. The helical transmembrane segment at 364–384 threads the bilayer; it reads AGAVMIVFSCLFIFSFAQTWG. The Cytoplasmic segment spans residues 385–404; the sequence is PAAYVIVGESYPIRYRSKCA. A helical membrane pass occupies residues 405–425; it reads AVATTGNWLWGFLITFFTPFI. The Mitochondrial intermembrane portion of the chain corresponds to 426 to 432; that stretch reads SDSIGFK. The helical transmembrane segment at 433–453 threads the bilayer; it reads YGYIFAACNLCAACIIFLFAH. Over 454–547 the chain is Cytoplasmic; sequence ETKGLTLEEI…NYVDEQDRYA (94 aa). Residues 482-547 are disordered; it reads GQAAKQQQEV…NYVDEQDRYA (66 aa). Low complexity predominate over residues 517 to 529; sequence TSSNDITSSTSSS. Phosphoserine is present on Ser519. 2 positions are modified to phosphothreonine: Thr523 and Thr526. 4 positions are modified to phosphoserine: Ser527, Ser528, Ser529, and Ser537.

It belongs to the major facilitator superfamily. Sugar transporter (TC 2.A.1.1) family.

The protein localises to the mitochondrion membrane. The chain is Probable high-affinity hexose transporter ght8, mitochondrial (ght8) from Schizosaccharomyces pombe (strain 972 / ATCC 24843) (Fission yeast).